We begin with the raw amino-acid sequence, 118 residues long: T cell receptor gamma variable 5 (118 aa).

Residues 1–17 (MRWALLVLLAFLSPASQ) form the signal peptide. Residues 18–118 (KSSNLEGGTK…GVYYCATWDR (101 aa)) enclose the Ig-like domain. C41 and C113 are oxidised to a cystine. N106 carries an N-linked (GlcNAc...) asparagine glycan.

Gamma-delta TR is a heterodimer composed of a gamma and delta chain; disulfide-linked. The gamma-delta TR is associated with the transmembrane signaling CD3 coreceptor proteins following the stoichiometry: a single gamma-delta TR heterodimer associates with one CD3D-CD3E heterodimer, one CD3G-CD3E heterodimer and one CD247 homodimer forming a stable octameric structure. Upon activation, gamma-delta TR complex associates with FCER1G to initiate intracellular signaling.

It localises to the cell membrane. Its function is as follows. V region of the variable domain of T cell receptor (TR) gamma chain that participates in the antigen recognition. Gamma-delta TRs recognize a variety of self and foreign non-peptide antigens frequently expressed at the epithelial boundaries between the host and external environment, including endogenous lipids presented by MH-like protein CD1D and phosphoantigens presented by butyrophilin-like molecule BTN3A1. Upon antigen recognition induces rapid, innate-like immune responses involved in pathogen clearance and tissue repair. Binding of gamma-delta TR complex to antigen triggers phosphorylation of immunoreceptor tyrosine-based activation motifs (ITAMs) in the CD3 chains by the LCK and FYN kinases, allowing the recruitment, phosphorylation, and activation of ZAP70 that facilitates phosphorylation of the scaffolding proteins LCP2 and LAT. This lead to the formation of a supramolecular signalosome that recruits the phospholipase PLCG1, resulting in calcium mobilization and ERK activation, ultimately leading to T cell expansion and differentiation into effector cells. Gamma-delta TRs are produced through somatic rearrangement of a limited repertoire of variable (V), diversity (D), and joining (J) genes. The potential diversity of gamma-delta TRs is conferred by the unique ability to rearrange (D) genes in tandem and to utilize all three reading frames. The combinatorial diversity is considerably increased by the sequence exonuclease trimming and random nucleotide (N) region additions which occur during the V-(D)-J rearrangements. The chain is T cell receptor gamma variable 5 from Homo sapiens (Human).